The primary structure comprises 529 residues: Calcium/calmodulin-dependent protein kinase type II subunit gamma (529 aa).

Residues Tyr-14–Val-272 enclose the Protein kinase domain. Residues Leu-20–Val-28 and Lys-43 contribute to the ATP site. The Proton acceptor role is filled by Asp-136. The autoinhibitory domain stretch occupies residues His-283–Arg-292. Phosphothreonine; by autocatalysis occurs at positions 287, 306, and 307. A calmodulin-binding region spans residues Phe-294–Ala-316. Ser-311, Ser-334, Ser-349, Ser-352, and Ser-455 each carry phosphoserine. Residues Lys-324 to Pro-353 are disordered. Over residues Pro-342–Ser-352 the composition is skewed to polar residues.

The protein belongs to the protein kinase superfamily. CAMK Ser/Thr protein kinase family. CaMK subfamily. In terms of assembly, CAMK2 is composed of 4 different chains: alpha (CAMK2A), beta (CAMK2B), gamma (CAMK2G), and delta (CAMK2D). The different isoforms assemble into homo- or heteromultimeric holoenzymes composed of 12 subunits with two hexameric rings stacked one on top of the other. In terms of processing, autophosphorylation of Thr-287 following activation by Ca(2+)/calmodulin. Phosphorylation of Thr-287 locks the kinase into an activated state.

Its subcellular location is the sarcoplasmic reticulum membrane. The enzyme catalyses L-seryl-[protein] + ATP = O-phospho-L-seryl-[protein] + ADP + H(+). It catalyses the reaction L-threonyl-[protein] + ATP = O-phospho-L-threonyl-[protein] + ADP + H(+). Its activity is regulated as follows. Activated by Ca(2+)/calmodulin. Binding of calmodulin results in conformational change that relieves intrasteric autoinhibition and allows autophosphorylation of Thr-287 which turns the kinase in a constitutively active form and confers to the kinase a Ca(2+)-independent activity. Its function is as follows. Calcium/calmodulin-dependent protein kinase that functions autonomously after Ca(2+)/calmodulin-binding and autophosphorylation, and is involved in sarcoplasmic reticulum Ca(2+) transport in skeletal muscle and may function in dendritic spine and synapse formation and neuronal plasticity. In slow-twitch muscles, is involved in regulation of sarcoplasmic reticulum (SR) Ca(2+) transport and in fast-twitch muscle participates in the control of Ca(2+) release from the SR through phosphorylation of the ryanodine receptor-coupling factor triadin. In the central nervous system, it is involved in the regulation of neurite formation and arborization. It may participate in the promotion of dendritic spine and synapse formation and maintenance of synaptic plasticity which enables long-term potentiation (LTP) and hippocampus-dependent learning. In response to interferon-gamma (IFN-gamma) stimulation, catalyzes phosphorylation of STAT1, stimulating the JAK-STAT signaling pathway. The chain is Calcium/calmodulin-dependent protein kinase type II subunit gamma (Camk2g) from Mus musculus (Mouse).